Here is a 101-residue protein sequence, read N- to C-terminus: Glutaredoxin-1 (101 aa).

The 97-residue stretch at 5–101 folds into the Glutaredoxin domain; that stretch reads KDRVEKLIQT…GSLSKMIAAL (97 aa). Cysteine 25 and cysteine 28 are oxidised to a cystine.

Belongs to the glutaredoxin family.

Its subcellular location is the cytoplasm. It localises to the cytosol. In terms of biological role, multifunctional enzyme with glutathione-dependent oxidoreductase, glutathione peroxidase and glutathione S-transferase (GST) activity. The disulfide bond functions as an electron carrier in the glutathione-dependent synthesis of deoxyribonucleotides by the enzyme ribonucleotide reductase. In addition, it is also involved in reducing cytosolic protein- and non-protein-disulfides in a coupled system with glutathione reductase. May play a role in protection against oxidative stress caused by superoxide in vivo by regulating the redox state of the protein sulfhydryl groups. The protein is Glutaredoxin-1 of Rhizophagus irregularis (strain DAOM 181602 / DAOM 197198 / MUCL 43194) (Arbuscular mycorrhizal fungus).